The primary structure comprises 840 residues: Homeobox-leucine zipper protein HOX9 (840 aa).

Disordered stretches follow at residues 1-26 (MAAA…AGMD) and 135-160 (NPSL…DASN). Over residues 12–21 (GSDGGGGGYD) the composition is skewed to gly residues. The segment at residues 26 to 89 (DSGKYVRYTP…NRRCRDKQRK (64 aa)) is a DNA-binding region (homeobox). Residues 86–135 (KQRKEASRLQAVNRKLTAMNKLLMEENERLQKQVSQLVHENAYMKQQLQN) adopt a coiled-coil conformation. An START domain is found at 157–385 (DASNPSGLLT…IAQETSGEVV (229 aa)).

Belongs to the HD-ZIP homeobox family. Class III subfamily. As to expression, expressed in seedlings, roots, stems, leaf sheaths and blades and panicles.

The protein resides in the nucleus. Functionally, probable transcription factor. In Oryza sativa subsp. indica (Rice), this protein is Homeobox-leucine zipper protein HOX9 (HOX9).